Consider the following 173-residue polypeptide: Putative pre-16S rRNA nuclease (173 aa).

Belongs to the YqgF nuclease family.

The protein resides in the cytoplasm. Its function is as follows. Could be a nuclease involved in processing of the 5'-end of pre-16S rRNA. In Rhodopirellula baltica (strain DSM 10527 / NCIMB 13988 / SH1), this protein is Putative pre-16S rRNA nuclease.